Here is a 105-residue protein sequence, read N- to C-terminus: Fe-S protein maturation auxiliary factor PG_1777 (105 aa).

Belongs to the Fe-S cluster assembly domain superfamily. MIP18-like family. As to quaternary structure, putative homodimer; may be disulfide-linked.

In terms of biological role, iron binding protein that protects DNA from Fenton chemistry-mediated damage caused by hydrogen peroxide induced oxidative stress. May be involved in iron-sulfur cluster assembly. This chain is Fe-S protein maturation auxiliary factor PG_1777, found in Porphyromonas gingivalis (strain ATCC BAA-308 / W83).